The chain runs to 353 residues: tRNA-specific 2-thiouridylase MnmA 1 (353 aa).

Residues 9 to 16 (AMSGGVDS) and Met-35 contribute to the ATP site. Residue Cys-98 is the Nucleophile of the active site. Cysteines 98 and 194 form a disulfide. Gly-122 contacts ATP. The interaction with tRNA stretch occupies residues 144–146 (KDQ). Cys-194 functions as the Cysteine persulfide intermediate in the catalytic mechanism. Positions 300-301 (RY) are interaction with tRNA.

Belongs to the MnmA/TRMU family.

The protein resides in the cytoplasm. It catalyses the reaction S-sulfanyl-L-cysteinyl-[protein] + uridine(34) in tRNA + AH2 + ATP = 2-thiouridine(34) in tRNA + L-cysteinyl-[protein] + A + AMP + diphosphate + H(+). Catalyzes the 2-thiolation of uridine at the wobble position (U34) of tRNA, leading to the formation of s(2)U34. The sequence is that of tRNA-specific 2-thiouridylase MnmA 1 from Clostridium botulinum (strain Okra / Type B1).